The primary structure comprises 75 residues: Small ribosomal subunit protein bS21A (75 aa).

This sequence belongs to the bacterial ribosomal protein bS21 family.

The sequence is that of Small ribosomal subunit protein bS21A (rpsU1) from Agrobacterium fabrum (strain C58 / ATCC 33970) (Agrobacterium tumefaciens (strain C58)).